Here is a 139-residue protein sequence, read N- to C-terminus: D-ribose pyranase (139 aa).

His20 acts as the Proton donor in catalysis. Substrate-binding positions include Asp28, His106, and 128-130; that span reads YAN.

This sequence belongs to the RbsD / FucU family. RbsD subfamily. As to quaternary structure, homodecamer.

The protein localises to the cytoplasm. The enzyme catalyses beta-D-ribopyranose = beta-D-ribofuranose. Its pathway is carbohydrate metabolism; D-ribose degradation; D-ribose 5-phosphate from beta-D-ribopyranose: step 1/2. Functionally, catalyzes the interconversion of beta-pyran and beta-furan forms of D-ribose. This Pasteurella multocida (strain Pm70) protein is D-ribose pyranase.